The sequence spans 743 residues: Phosphoribosylformylglycinamidine synthase subunit PurL (743 aa).

Residue His54 is part of the active site. Residues Tyr57 and Lys96 each contribute to the ATP site. Glu98 contacts Mg(2+). Residues 99 to 102 (SHNH) and Arg121 contribute to the substrate site. The active-site Proton acceptor is His100. Asp122 is a binding site for Mg(2+). Gln245 contacts substrate. Asp273 serves as a coordination point for Mg(2+). 317–319 (ESQ) provides a ligand contact to substrate. ATP-binding residues include Asp501 and Gly538. Asn539 lines the Mg(2+) pocket. Ser541 contributes to the substrate binding site.

This sequence belongs to the FGAMS family. As to quaternary structure, monomer. Part of the FGAM synthase complex composed of 1 PurL, 1 PurQ and 2 PurS subunits.

Its subcellular location is the cytoplasm. It carries out the reaction N(2)-formyl-N(1)-(5-phospho-beta-D-ribosyl)glycinamide + L-glutamine + ATP + H2O = 2-formamido-N(1)-(5-O-phospho-beta-D-ribosyl)acetamidine + L-glutamate + ADP + phosphate + H(+). The protein operates within purine metabolism; IMP biosynthesis via de novo pathway; 5-amino-1-(5-phospho-D-ribosyl)imidazole from N(2)-formyl-N(1)-(5-phospho-D-ribosyl)glycinamide: step 1/2. Its function is as follows. Part of the phosphoribosylformylglycinamidine synthase complex involved in the purines biosynthetic pathway. Catalyzes the ATP-dependent conversion of formylglycinamide ribonucleotide (FGAR) and glutamine to yield formylglycinamidine ribonucleotide (FGAM) and glutamate. The FGAM synthase complex is composed of three subunits. PurQ produces an ammonia molecule by converting glutamine to glutamate. PurL transfers the ammonia molecule to FGAR to form FGAM in an ATP-dependent manner. PurS interacts with PurQ and PurL and is thought to assist in the transfer of the ammonia molecule from PurQ to PurL. This Halalkalibacterium halodurans (strain ATCC BAA-125 / DSM 18197 / FERM 7344 / JCM 9153 / C-125) (Bacillus halodurans) protein is Phosphoribosylformylglycinamidine synthase subunit PurL.